The sequence spans 309 residues: Homoserine kinase (309 aa).

91–101 (PIGSGLGSSAC) serves as a coordination point for ATP.

Belongs to the GHMP kinase family. Homoserine kinase subfamily.

The protein localises to the cytoplasm. The catalysed reaction is L-homoserine + ATP = O-phospho-L-homoserine + ADP + H(+). It participates in amino-acid biosynthesis; L-threonine biosynthesis; L-threonine from L-aspartate: step 4/5. Catalyzes the ATP-dependent phosphorylation of L-homoserine to L-homoserine phosphate. In Edwardsiella ictaluri (strain 93-146), this protein is Homoserine kinase.